Reading from the N-terminus, the 572-residue chain is Urease subunit alpha (572 aa).

Residues Gly-136–Phe-572 enclose the Urease domain. Residues His-141, His-143, and Lys-224 each contribute to the Ni(2+) site. Lys-224 carries the N6-carboxylysine modification. A substrate-binding site is contributed by His-226. Positions 253 and 279 each coordinate Ni(2+). Catalysis depends on His-327, which acts as the Proton donor. Ni(2+) is bound at residue Asp-367.

This sequence belongs to the metallo-dependent hydrolases superfamily. Urease alpha subunit family. As to quaternary structure, heterotrimer of UreA (gamma), UreB (beta) and UreC (alpha) subunits. Three heterotrimers associate to form the active enzyme. Ni cation serves as cofactor. Carboxylation allows a single lysine to coordinate two nickel ions.

The protein resides in the cytoplasm. It catalyses the reaction urea + 2 H2O + H(+) = hydrogencarbonate + 2 NH4(+). The protein operates within nitrogen metabolism; urea degradation; CO(2) and NH(3) from urea (urease route): step 1/1. This chain is Urease subunit alpha, found in Actinobacillus pleuropneumoniae serotype 7 (strain AP76).